The chain runs to 329 residues: Lipoyl synthase (329 aa).

Positions 72, 77, 83, 98, 102, 105, and 313 each coordinate [4Fe-4S] cluster. One can recognise a Radical SAM core domain in the interval cysteine 83 to glutamate 303.

It belongs to the radical SAM superfamily. Lipoyl synthase family. It depends on [4Fe-4S] cluster as a cofactor.

The protein resides in the cytoplasm. It carries out the reaction [[Fe-S] cluster scaffold protein carrying a second [4Fe-4S](2+) cluster] + N(6)-octanoyl-L-lysyl-[protein] + 2 oxidized [2Fe-2S]-[ferredoxin] + 2 S-adenosyl-L-methionine + 4 H(+) = [[Fe-S] cluster scaffold protein] + N(6)-[(R)-dihydrolipoyl]-L-lysyl-[protein] + 4 Fe(3+) + 2 hydrogen sulfide + 2 5'-deoxyadenosine + 2 L-methionine + 2 reduced [2Fe-2S]-[ferredoxin]. Its pathway is protein modification; protein lipoylation via endogenous pathway; protein N(6)-(lipoyl)lysine from octanoyl-[acyl-carrier-protein]: step 2/2. In terms of biological role, catalyzes the radical-mediated insertion of two sulfur atoms into the C-6 and C-8 positions of the octanoyl moiety bound to the lipoyl domains of lipoate-dependent enzymes, thereby converting the octanoylated domains into lipoylated derivatives. This is Lipoyl synthase from Legionella pneumophila (strain Corby).